Consider the following 368-residue polypeptide: H-2 class I histocompatibility antigen, K-W28 alpha chain (368 aa).

A signal peptide spans 1–21 (MAPCMLLLLLAAALAPTQTRA). Residues 22 to 111 (GPHSLRYFHT…LLRYYNQSAG (90 aa)) are alpha-1. Topologically, residues 22-305 (GPHSLRYFHT…EPPPSAVSNT (284 aa)) are extracellular. Asn-107 is a glycosylation site (N-linked (GlcNAc...) asparagine). An alpha-2 region spans residues 112–203 (GSHTIQRMYG…KNGNATLLRT (92 aa)). A disulfide bridge connects residues Cys-122 and Cys-185. Residue Asn-197 is glycosylated (N-linked (GlcNAc...) asparagine). An alpha-3 region spans residues 204 to 295 (DSPKAHVTHH…GLPKPLTLRW (92 aa)). An Ig-like C1-type domain is found at 206–292 (PKAHVTHHSR…YHQGLPKPLT (87 aa)). A disulfide bond links Cys-224 and Cys-280. Residues 296–305 (EPPPSAVSNT) are connecting peptide. Residues 306-329 (VIIAVLVVLGAAIVTGAVVAFVMM) traverse the membrane as a helical segment. Residues 330 to 368 (RRRNTGGKGGDYALAPGSQTSDLSLPDCKVMVHDPHSLA) are Cytoplasmic-facing. Phosphoserine occurs at positions 350 and 353.

This sequence belongs to the MHC class I family. As to quaternary structure, heterodimer of an alpha chain and a beta chain (beta-2-microglobulin).

The protein localises to the membrane. Functionally, involved in the presentation of foreign antigens to the immune system. The sequence is that of H-2 class I histocompatibility antigen, K-W28 alpha chain (H2-K1) from Mus musculus (Mouse).